We begin with the raw amino-acid sequence, 373 residues long: Probable tRNA sulfurtransferase (373 aa).

In terms of domain architecture, THUMP spans 54-158 (NKNIEELSKV…NDVAYFYYKI (105 aa)). ATP-binding positions include 176 to 177 (LF), 201 to 202 (NF), Lys-256, Gly-278, and Gln-287.

The protein belongs to the ThiI family.

Its subcellular location is the cytoplasm. It catalyses the reaction [ThiI sulfur-carrier protein]-S-sulfanyl-L-cysteine + a uridine in tRNA + 2 reduced [2Fe-2S]-[ferredoxin] + ATP + H(+) = [ThiI sulfur-carrier protein]-L-cysteine + a 4-thiouridine in tRNA + 2 oxidized [2Fe-2S]-[ferredoxin] + AMP + diphosphate. It carries out the reaction [ThiS sulfur-carrier protein]-C-terminal Gly-Gly-AMP + S-sulfanyl-L-cysteinyl-[cysteine desulfurase] + AH2 = [ThiS sulfur-carrier protein]-C-terminal-Gly-aminoethanethioate + L-cysteinyl-[cysteine desulfurase] + A + AMP + 2 H(+). The protein operates within cofactor biosynthesis; thiamine diphosphate biosynthesis. Catalyzes the ATP-dependent transfer of a sulfur to tRNA to produce 4-thiouridine in position 8 of tRNAs, which functions as a near-UV photosensor. Also catalyzes the transfer of sulfur to the sulfur carrier protein ThiS, forming ThiS-thiocarboxylate. This is a step in the synthesis of thiazole, in the thiamine biosynthesis pathway. The sulfur is donated as persulfide by IscS. The chain is Probable tRNA sulfurtransferase from Saccharolobus islandicus (strain Y.N.15.51 / Yellowstone #2) (Sulfolobus islandicus).